The following is a 130-amino-acid chain: ESAT-6 secretion system extracellular protein C (130 aa).

Belongs to the EsxC family.

The protein localises to the secreted. The chain is ESAT-6 secretion system extracellular protein C from Staphylococcus aureus (strain MSSA476).